The following is a 248-amino-acid chain: tRNA (guanine-N(1)-)-methyltransferase (248 aa).

S-adenosyl-L-methionine-binding positions include Gly113 and 133–138; that span reads IGDYVL. The segment at 226–248 is disordered; it reads ARPAQTIRAKGESQKTPKNKTDG. The segment covering 234-248 has biased composition (basic and acidic residues); sequence AKGESQKTPKNKTDG.

This sequence belongs to the RNA methyltransferase TrmD family. In terms of assembly, homodimer.

It localises to the cytoplasm. The catalysed reaction is guanosine(37) in tRNA + S-adenosyl-L-methionine = N(1)-methylguanosine(37) in tRNA + S-adenosyl-L-homocysteine + H(+). Functionally, specifically methylates guanosine-37 in various tRNAs. The chain is tRNA (guanine-N(1)-)-methyltransferase from Rhodopseudomonas palustris (strain ATCC BAA-98 / CGA009).